The following is a 314-amino-acid chain: MSQALRIVFAGTPEFAAEHLKALLDTPHRIVAVYTQPDRPAGRGQKLMPSAVKSLALEHGLPVMQPQSLRNAEAQAELAALRADLMVVVAYGLILPQAVLDIPRLGCINSHASLLPRWRGAAPIQRAVEAGDAESGVTVMQMEAGLDTGPMLLKVSTPISAADTGGSLHDRLAALGPKAVVEAIAGLAAGTLHGEDQDDALATYAHKLNKDEARLDWSRPAVELERQVRAFTPWPVCHTSLADAPLKVLGASLGQGSGAPGTILEASRDGLLVACGEGALRLTRLQVPGGKPLAFADLYNSRREQFATGQVLGQ.

113-116 (SLLP) contacts (6S)-5,6,7,8-tetrahydrofolate.

The protein belongs to the Fmt family.

It carries out the reaction L-methionyl-tRNA(fMet) + (6R)-10-formyltetrahydrofolate = N-formyl-L-methionyl-tRNA(fMet) + (6S)-5,6,7,8-tetrahydrofolate + H(+). Its function is as follows. Attaches a formyl group to the free amino group of methionyl-tRNA(fMet). The formyl group appears to play a dual role in the initiator identity of N-formylmethionyl-tRNA by promoting its recognition by IF2 and preventing the misappropriation of this tRNA by the elongation apparatus. The protein is Methionyl-tRNA formyltransferase of Pseudomonas aeruginosa (strain UCBPP-PA14).